The chain runs to 534 residues: Acyl-CoA-binding domain-containing protein 5 (534 aa).

The 90-residue stretch at 41 to 130 folds into the ACB domain; sequence HETRFEAAVK…MKKIIETMPM (90 aa). Residue 52–61 participates in an acyl-CoA binding; the sequence is IQSLPKNGSF. Residue P63 is modified to Phosphothreonine. An acyl-CoA contacts are provided by residues 72 to 76, K98, and Y117; that span reads YSFYK. 2 positions are modified to phosphothreonine: L137 and E172. A disordered region spans residues 181–225; that stretch reads TPNAKTVNGKAESSDSGAESEEEEAQEEVKGAEQSDNDKKMMKKS. A coiled-coil region spans residues 190-219; sequence KAESSDSGAESEEEEAQEEVKGAEQSDNDK. A phosphoserine mark is found at S193, S194, S196, S200, S215, S279, and S313. The span at 207–225 shows a compositional bias: basic and acidic residues; the sequence is EEVKGAEQSDNDKKMMKKS. A compositionally biased stretch (basic and acidic residues) spans 376-385; sequence EVKHGGEDGR. The tract at residues 376 to 442 is disordered; it reads EVKHGGEDGR…ERWGSDRGSR (67 aa). T400 carries the post-translational modification Phosphothreonine. The residue at position 428 (S428) is a Phosphoserine. Positions 431-441 are enriched in basic and acidic residues; the sequence is DGERWGSDRGS. Residues 447–476 are a coiled coil; sequence EQIALVLMRLQEDMQNVLQRLQKLETLTAL. An N6-acetyllysine modification is found at K469. A helical transmembrane segment spans residues 506–526; the sequence is GVLTFAIIWPFIAQWLVYLYY.

It belongs to the ATG37 family.

Its subcellular location is the peroxisome membrane. Acyl-CoA binding protein which acts as the peroxisome receptor for pexophagy but is dispensable for aggrephagy and nonselective autophagy. Binds medium- and long-chain acyl-CoA esters. The protein is Acyl-CoA-binding domain-containing protein 5 (ACBD5) of Homo sapiens (Human).